The chain runs to 117 residues: Hainantoxin-XV-2 (117 aa).

The N-terminal stretch at 1 to 20 (MKLCAVIIASLLVCVAVASS) is a signal peptide. The interval 20-55 (SSDNQKEFAQEKEMTREETQSLGEHEKDDEVTGSEE) is disordered. Positions 21-56 (SDNQKEFAQEKEMTREETQSLGEHEKDDEVTGSEER) are excised as a propeptide. Basic and acidic residues predominate over residues 23–55 (NQKEFAQEKEMTREETQSLGEHEKDDEVTGSEE). Intrachain disulfides connect cysteine 58–cysteine 72, cysteine 65–cysteine 78, cysteine 69–cysteine 115, and cysteine 71–cysteine 91.

Belongs to the neurotoxin 03 (Tx2) family. 02 subfamily. HNTX-XV sub-subfamily. As to expression, expressed by the venom gland.

It is found in the secreted. Functionally, putative ion channel inhibitor. This Cyriopagopus hainanus (Chinese bird spider) protein is Hainantoxin-XV-2.